Reading from the N-terminus, the 1261-residue chain is Myosin-1 (1261 aa).

Residues 1 to 39 (MGHSRRPVGGEKKSRGFGRSKVADVGDGRQAGKPQVKKA) form a disordered region. The Myosin motor domain occupies 49–728 (IGVSDLTLLS…TLFALEAMRD (680 aa)). 142–149 (GESGAGKT) provides a ligand contact to ATP. At Ser-370 the chain carries Phosphoserine. The interval 417–499 (SIGILDIYGF…PGVFAALNDA (83 aa)) is actin-binding. 2 IQ domains span residues 732-752 (HNMA…RIEC) and 753-778 (AIRI…QGHQ). Residues 786–973 (RRRMSLLGSR…KSHTIHTSPG (188 aa)) enclose the TH1 domain. Disordered stretches follow at residues 956–1093 (ASPN…KALY) and 1139–1261 (YLEE…DDEW). Pro residues-rich tracts occupy residues 1019 to 1029 (RPTPKPQPLPQ), 1038 to 1052 (IPAP…PVPQ), 1072 to 1084 (APPP…PPAP), and 1147 to 1159 (TPKP…PPAA). One can recognise an SH3 domain in the interval 1084–1145 (PKKATAKALY…PQAYLEEQVA (62 aa)). Residues 1160 to 1181 (PRASPVPSANGAAATAAAAKAK) are compositionally biased toward low complexity. Positions 1212-1233 (VSMNSQDSSGGSGRGTPNSTSN) are enriched in polar residues. Over residues 1234–1243 (ASLAGGLAEA) the composition is skewed to low complexity.

Belongs to the TRAFAC class myosin-kinesin ATPase superfamily. Myosin family. In terms of processing, phosphorylation of the TEDS site (Ser-370) is required for the polarization of the actin cytoskeleton. Phosphorylation probably activates the myosin-I ATPase activity.

It is found in the cytoplasm. The protein localises to the cytoskeleton. It localises to the actin patch. Functionally, type-I myosin implicated in the organization of the actin cytoskeleton. Required for proper actin cytoskeleton polarization. At the cell cortex, assembles in patch-like structures together with proteins from the actin-polymerizing machinery and promotes actin assembly. Functions as actin nucleation-promoting factor (NPF) for the Arp2/3 complex. Plays an important role in polarized growth, spore germination, hyphal morphogenesis, and septal wall formation. In Aspergillus oryzae (strain ATCC 42149 / RIB 40) (Yellow koji mold), this protein is Myosin-1 (myoA).